The following is a 288-amino-acid chain: Thymidylate synthase (288 aa).

R21 is a binding site for dUMP. N51 provides a ligand contact to (6R)-5,10-methylene-5,6,7,8-tetrahydrofolate. Residue 150 to 151 (RR) participates in dUMP binding. C170 (nucleophile) is an active-site residue. DUMP-binding positions include 190-193 (RSGD), N201, and 231-233 (HIY). D193 lines the (6R)-5,10-methylene-5,6,7,8-tetrahydrofolate pocket. A287 provides a ligand contact to (6R)-5,10-methylene-5,6,7,8-tetrahydrofolate.

It belongs to the thymidylate synthase family. Bacterial-type ThyA subfamily. In terms of assembly, homodimer.

The protein resides in the cytoplasm. The catalysed reaction is dUMP + (6R)-5,10-methylene-5,6,7,8-tetrahydrofolate = 7,8-dihydrofolate + dTMP. It participates in pyrimidine metabolism; dTTP biosynthesis. Its function is as follows. Catalyzes the reductive methylation of 2'-deoxyuridine-5'-monophosphate (dUMP) to 2'-deoxythymidine-5'-monophosphate (dTMP) while utilizing 5,10-methylenetetrahydrofolate (mTHF) as the methyl donor and reductant in the reaction, yielding dihydrofolate (DHF) as a by-product. This enzymatic reaction provides an intracellular de novo source of dTMP, an essential precursor for DNA biosynthesis. This is Thymidylate synthase from Aster yellows witches'-broom phytoplasma (strain AYWB).